Consider the following 298-residue polypeptide: Leucine-rich repeat-containing protein 38 (298 aa).

A signal peptide spans 1–31 (MSLCVAPRHPTGAAAALGLGSLLVLLGPGRA). Cystine bridges form between C32-C38 and C36-C46. Residues 32 to 60 (CPAGCACTDPHTVDCRDRGLPSVPDPFPL) form the LRRNT domain. Topologically, residues 32-251 (CPAGCACTDP…ECKFSLSLTD (220 aa)) are extracellular. LRR repeat units follow at residues 61 to 82 (DVRKLLVAGNRIQQIPEDFFIF), 85 to 106 (DLVYLDFRNNSLRSLEEGTFSG), 109 to 130 (KLAFLDLSYNNLTQLGAGAFRS), 133 to 154 (RLVKLSLANNHLAGVHEAAFES), and 157 to 177 (SLQVLELNDNNLRSLNVAALD). A glycan (N-linked (GlcNAc...) asparagine) is linked at N119. An LRRCT domain is found at 190-245 (NPWLCDCDFAHLFSWIQENTSKLPKGLDAIQCSLPMEDRRVALRELSEASFSECKF). 2 disulfides stabilise this stretch: C194-C221 and C196-C243. The helical transmembrane segment at 252–272 (LFIIIFSGVAVSIAAIISSFF) threads the bilayer. Residues 273-298 (LATVVQCFQRCAPNKDTEDEDDDEDD) are Cytoplasmic-facing.

Interacts with KCNMA1.

It localises to the cell membrane. Its function is as follows. Auxiliary protein of the large-conductance, voltage and calcium-activated potassium channel (BK alpha). Modulates gating properties by producing a marked shift in the BK channel's voltage dependence of activation in the hyperpolarizing direction, and in the absence of calcium. This Mus musculus (Mouse) protein is Leucine-rich repeat-containing protein 38 (Lrrc38).